The following is a 488-amino-acid chain: Cobyric acid synthase (488 aa).

The GATase cobBQ-type domain maps to 248–441 (VLRVVVPALP…VHGLFDAPDA (194 aa)). Cys328 acts as the Nucleophile in catalysis. His433 is a catalytic residue.

This sequence belongs to the CobB/CobQ family. CobQ subfamily.

The protein operates within cofactor biosynthesis; adenosylcobalamin biosynthesis. Catalyzes amidations at positions B, D, E, and G on adenosylcobyrinic A,C-diamide. NH(2) groups are provided by glutamine, and one molecule of ATP is hydrogenolyzed for each amidation. The sequence is that of Cobyric acid synthase from Burkholderia ambifaria (strain ATCC BAA-244 / DSM 16087 / CCUG 44356 / LMG 19182 / AMMD) (Burkholderia cepacia (strain AMMD)).